Consider the following 161-residue polypeptide: Immunity protein YezG (161 aa).

Monomer. Interacts with the C-terminus of cognate toxin YeeF, probably with 2:2 stoichiometry. The second YezG molecules binds with lower affinity.

The protein localises to the cytoplasm. Its function is as follows. Immunity component of an LXG toxin-immunity module. These modules promote kin selection, mediate competition in biofilms, and drive spatial segregation of different strains, indicating that LXG toxins may help avoid warfare between strains in biofilms. Neutralizes the toxic abilities of cognate toxin YeeF upon expression in E.coli and in vitro. The protein is Immunity protein YezG of Bacillus spizizenii (strain ATCC 23059 / NRRL B-14472 / W23) (Bacillus subtilis subsp. spizizenii).